Reading from the N-terminus, the 249-residue chain is Triosephosphate isomerase (249 aa).

9–11 (NWK) is a binding site for substrate. His-95 serves as the catalytic Electrophile. The active-site Proton acceptor is Glu-166. Substrate is bound by residues Gly-172, Ser-211, and 232 to 233 (GG).

This sequence belongs to the triosephosphate isomerase family. As to quaternary structure, homodimer.

The protein resides in the cytoplasm. It carries out the reaction D-glyceraldehyde 3-phosphate = dihydroxyacetone phosphate. Its pathway is carbohydrate biosynthesis; gluconeogenesis. It functions in the pathway carbohydrate degradation; glycolysis; D-glyceraldehyde 3-phosphate from glycerone phosphate: step 1/1. Involved in the gluconeogenesis. Catalyzes stereospecifically the conversion of dihydroxyacetone phosphate (DHAP) to D-glyceraldehyde-3-phosphate (G3P). The chain is Triosephosphate isomerase from Legionella pneumophila (strain Lens).